The following is a 72-amino-acid chain: Heat-stable enterotoxin ST-IA/ST-P (72 aa).

The first 19 residues, 1–19 (MKKLMLAIFISVLSFPSFS), serve as a signal peptide directing secretion. Positions 20-54 (QSTESLDSSKEKITLETKKCDVVKNNSEKKSENMN) are excised as a propeptide. 3 disulfide bridges follow: Cys-59/Cys-64, Cys-60/Cys-68, and Cys-63/Cys-71.

This sequence belongs to the heat-stable enterotoxin family.

The protein resides in the secreted. Functionally, toxin which activates the particulate form of guanylate cyclase and increases cyclic GMP levels within the host intestinal epithelial cells. The protein is Heat-stable enterotoxin ST-IA/ST-P (sta1) of Escherichia coli.